The sequence spans 436 residues: tRNA pseudouridine synthase Pus10 (436 aa).

Asp254 (nucleophile) is an active-site residue. Residues Tyr322 and Tyr394 each contribute to the substrate site.

Belongs to the pseudouridine synthase Pus10 family.

It carries out the reaction uridine(54) in tRNA = pseudouridine(54) in tRNA. It catalyses the reaction uridine(55) in tRNA = pseudouridine(55) in tRNA. Responsible for synthesis of pseudouridine from uracil-54 and uracil-55 in the psi GC loop of transfer RNAs. This is tRNA pseudouridine synthase Pus10 from Methanopyrus kandleri (strain AV19 / DSM 6324 / JCM 9639 / NBRC 100938).